A 117-amino-acid polypeptide reads, in one-letter code: NADPH-dependent 7-cyano-7-deazaguanine reductase (117 aa).

Cysteine 31 serves as the catalytic Thioimide intermediate. The Proton donor role is filled by aspartate 38. Residues 53–55 (IEL) and 72–73 (YE) contribute to the substrate site.

It belongs to the GTP cyclohydrolase I family. QueF type 1 subfamily.

It is found in the cytoplasm. The enzyme catalyses 7-aminomethyl-7-carbaguanine + 2 NADP(+) = 7-cyano-7-deazaguanine + 2 NADPH + 3 H(+). Its pathway is tRNA modification; tRNA-queuosine biosynthesis. Its function is as follows. Catalyzes the NADPH-dependent reduction of 7-cyano-7-deazaguanine (preQ0) to 7-aminomethyl-7-deazaguanine (preQ1). The protein is NADPH-dependent 7-cyano-7-deazaguanine reductase of Chlorobaculum tepidum (strain ATCC 49652 / DSM 12025 / NBRC 103806 / TLS) (Chlorobium tepidum).